A 111-amino-acid chain; its full sequence is Large ribosomal subunit protein uL24 (111 aa).

Belongs to the universal ribosomal protein uL24 family. Part of the 50S ribosomal subunit.

In terms of biological role, one of two assembly initiator proteins, it binds directly to the 5'-end of the 23S rRNA, where it nucleates assembly of the 50S subunit. One of the proteins that surrounds the polypeptide exit tunnel on the outside of the subunit. The chain is Large ribosomal subunit protein uL24 from Chlamydia pneumoniae (Chlamydophila pneumoniae).